The following is a 543-amino-acid chain: CTP synthase (543 aa).

Residues 1–265 (MARYIFITGG…DDEVLAAFAI (265 aa)) form an amidoligase domain region. CTP is bound at residue serine 13. UTP is bound at residue serine 13. 14–19 (SLGKGL) is an ATP binding site. An L-glutamine-binding site is contributed by tyrosine 54. ATP is bound at residue aspartate 71. Aspartate 71 and glutamate 139 together coordinate Mg(2+). CTP-binding positions include 146–148 (DIE), 186–191 (KTKPTQ), and lysine 222. UTP contacts are provided by residues 186–191 (KTKPTQ) and lysine 222. 238–240 (RDA) is a binding site for ATP. In terms of domain architecture, Glutamine amidotransferase type-1 spans 291–542 (TIAIVGKYTG…IEAALVRSRL (252 aa)). Glycine 353 lines the L-glutamine pocket. The active-site Nucleophile; for glutamine hydrolysis is cysteine 380. Residues 381–384 (FGMQ), glutamate 404, and arginine 470 each bind L-glutamine. Active-site residues include histidine 515 and glutamate 517.

The protein belongs to the CTP synthase family. As to quaternary structure, homotetramer.

The catalysed reaction is UTP + L-glutamine + ATP + H2O = CTP + L-glutamate + ADP + phosphate + 2 H(+). The enzyme catalyses L-glutamine + H2O = L-glutamate + NH4(+). It carries out the reaction UTP + NH4(+) + ATP = CTP + ADP + phosphate + 2 H(+). Its pathway is pyrimidine metabolism; CTP biosynthesis via de novo pathway; CTP from UDP: step 2/2. Allosterically activated by GTP, when glutamine is the substrate; GTP has no effect on the reaction when ammonia is the substrate. The allosteric effector GTP functions by stabilizing the protein conformation that binds the tetrahedral intermediate(s) formed during glutamine hydrolysis. Inhibited by the product CTP, via allosteric rather than competitive inhibition. Catalyzes the ATP-dependent amination of UTP to CTP with either L-glutamine or ammonia as the source of nitrogen. Regulates intracellular CTP levels through interactions with the four ribonucleotide triphosphates. The sequence is that of CTP synthase from Rhodopseudomonas palustris (strain BisB5).